Reading from the N-terminus, the 282-residue chain is MQSIQIPTGIHCANNLPFVLFGGINVLESEDLALRSCAEYVRVTDKLGIPYVFKASFDKANRSSIHSYRGPGLDEGMRIFEKVKQEFGVPIITDVHEPWQAAIVAQTADILQLPAFLARQTDLVIALAKTGKVINIKKPQFLSPSQMAHIAEKFREAGNDQLILCDRGSCFGYDNLVVDMLGFDVMTKSTGGLPVIFDVTHALQQRDPGGAASGGRRQQSAQLARSAMALGLAGLFLEAHPDPAKALCDGPSALPLAQLEPYLAQIKAIDDLVKSFDPLHID.

The protein belongs to the KdsA family.

It is found in the cytoplasm. It carries out the reaction D-arabinose 5-phosphate + phosphoenolpyruvate + H2O = 3-deoxy-alpha-D-manno-2-octulosonate-8-phosphate + phosphate. Its pathway is carbohydrate biosynthesis; 3-deoxy-D-manno-octulosonate biosynthesis; 3-deoxy-D-manno-octulosonate from D-ribulose 5-phosphate: step 2/3. It functions in the pathway bacterial outer membrane biogenesis; lipopolysaccharide biosynthesis. In Bordetella avium (strain 197N), this protein is 2-dehydro-3-deoxyphosphooctonate aldolase.